We begin with the raw amino-acid sequence, 773 residues long: Leucine-rich repeat-containing protein let-4 (773 aa).

Residues 1–20 form the signal peptide; the sequence is MRLLLCLLLFSTLLINSTNA. At 21–689 the chain is on the extracellular side; the sequence is CPGVITQACF…RLEKSFFTTT (669 aa). LRR repeat units follow at residues 61-84, 85-107, 109-132, 133-157, 159-181, 183-206, 207-230, 231-254, 256-278, 279-302, 303-326, 328-349, 350-373, 375-397, 399-421, and 486-516; these read VGLI…FFSG, LFIR…AFAG, NPVL…ALAG, LPNL…IFPN, NKLY…TFQN, KNSI…AIRG, LKQL…NFLN, LPVL…AFLN, PSLR…QFQT, FEQL…SLSG, LKQL…AFTN, SIVV…IISG, LPNL…AFYD, ASLV…TFLA, LNLL…AFNS, and LVQI…AFQQ. The chain crosses the membrane as a helical span at residues 690–710; the sequence is IIFICVGTAVIVLVVVIAGLC. At 711–773 the chain is on the cytoplasmic side; that stretch reads ISKHRQLQFE…PGSSYCNYYK (63 aa).

In L1 larvae, expressed in a subset of epithelial cells including epidermal, vulval and rectal cells and the excretory duct and pore. Absent from internal epithelia such as the gut and pharyngeal tubes. Transiently expressed in the excretory canal cell at the 1.5-fold embryonic stage but no longer visible in this cell at hatching.

The protein localises to the apical cell membrane. Its function is as follows. Required for apical extracellular matrix organization and epithelial junction maintenance. This chain is Leucine-rich repeat-containing protein let-4 (let-4), found in Caenorhabditis elegans.